Consider the following 735-residue polypeptide: Serine/threonine-protein kinase BRSK2 (735 aa).

A Protein kinase domain is found at 20–271 (YRLEKTLGKG…LEHIQKHIWY (252 aa)). ATP-binding positions include 26-34 (LGKGQTGLV) and K49. D142 acts as the Proton acceptor in catalysis. T175 carries the post-translational modification Phosphothreonine; by LKB1. At T261 the chain carries Phosphothreonine; by PKA. S295 bears the Phosphoserine mark. The UBA domain maps to 298–340 (DIDPDVLDSMHSLGCFRDRNKLLQDLLSEEENQEKMIYFLLLD). Positions 346-367 (PSHEDEDLPPRNEIDPPRKRVD) are enriched in basic and acidic residues. 3 disordered regions span residues 346–476 (PSHE…GVPW), 493–514 (FHRRKLQVPTPEEMSNLTPESS), and 682–735 (KNGQ…REQP). A phosphoserine mark is found at S368, S383, S394, S413, A417, S424, and S428. Over residues 411–429 (SRSISGASSGLSTSPLSSP) the composition is skewed to low complexity. Residues 432-446 (TPHPSPRGSPLPTPK) are compositionally biased toward pro residues. S456 carries the phosphoserine modification. Phosphothreonine is present on residues T460, T464, and T510. A phosphoserine mark is found at S513 and S514.

It belongs to the protein kinase superfamily. CAMK Ser/Thr protein kinase family. SNF1 subfamily. Interacts with FZR1, a regulatory subunit of the APC ubiquitin ligase complex. Interacts with COPS5. Interacts with PAK1. Requires Mg(2+) as cofactor. Post-translationally, may be phosphorylated at Thr-261 by PKA. Phosphorylated at Thr-175 by STK11/LKB1 in complex with STE20-related adapter-alpha (STRADA) pseudo kinase and CAB39. Not phosphorylated at Thr-175 by CaMKK2. In contrast, it is phosphorylated and activated by CaMKK1. May be inactivated via dephosphorylation of Thr-175 by PP2C. In terms of processing, polyubiquitinated by the APC complex in conjunction with FZR1, leading to its proteasomal degradation. Targeted for proteasomal degradation by interaction with COPS5. BRSK2 levels change during the cell cycle. BRSK2 levels are low at the G1/S boundary and gradually increase as cells progress into G2 phase. BRSK2 levels decrease rapidly at the end of mitosis.

The protein resides in the cytoplasm. The protein localises to the cytoskeleton. It localises to the microtubule organizing center. Its subcellular location is the centrosome. It is found in the perinuclear region. The protein resides in the endoplasmic reticulum. It carries out the reaction L-seryl-[protein] + ATP = O-phospho-L-seryl-[protein] + ADP + H(+). The catalysed reaction is L-threonyl-[protein] + ATP = O-phospho-L-threonyl-[protein] + ADP + H(+). It catalyses the reaction L-seryl-[tau protein] + ATP = O-phospho-L-seryl-[tau protein] + ADP + H(+). The enzyme catalyses L-threonyl-[tau protein] + ATP = O-phospho-L-threonyl-[tau protein] + ADP + H(+). Activated by phosphorylation on Thr-175 by STK11/LKB1. Its function is as follows. Serine/threonine-protein kinase that plays a key role in polarization of neurons and axonogenesis, cell cycle progress and insulin secretion. Phosphorylates CDK16, CDC25C, MAPT/TAU, PAK1 and WEE1. Following phosphorylation and activation by STK11/LKB1, acts as a key regulator of polarization of cortical neurons, probably by mediating phosphorylation of microtubule-associated proteins such as MAPT/TAU at 'Thr-523' and 'Ser-573'. Also regulates neuron polarization by mediating phosphorylation of WEE1 at 'Ser-642' in post-mitotic neurons, leading to down-regulate WEE1 activity in polarized neurons. Plays a role in the regulation of the mitotic cell cycle progress and the onset of mitosis. Plays a role in the regulation of insulin secretion in response to elevated glucose levels, probably via phosphorylation of CDK16 and PAK1. While BRSK2 phosphorylated at Thr-175 can inhibit insulin secretion, BRSK2 phosphorylated at Thr-261 can promote insulin secretion. Regulates reorganization of the actin cytoskeleton. May play a role in the apoptotic response triggered by endoplasmic reticulum (ER) stress. The sequence is that of Serine/threonine-protein kinase BRSK2 (Brsk2) from Rattus norvegicus (Rat).